Here is a 165-residue protein sequence, read N- to C-terminus: MNSLENLILVGVIKSCHGIKGHVILKSFTEPATKILERNLVNESGEDIHIKLISQNTKGELICTFNDIATRNEAENLKGYKLFCLRASLPKLEEDEFYIADLNHLPVLNQDHKEIGKIKNILNFGAGDIIEIEFLDQTTELLPFNKEFIPLITKDYVVLNYQREI.

The 72-residue stretch at 94–165 (EDEFYIADLN…YVVLNYQREI (72 aa)) folds into the PRC barrel domain.

It belongs to the RimM family. In terms of assembly, binds ribosomal protein uS19.

The protein resides in the cytoplasm. An accessory protein needed during the final step in the assembly of 30S ribosomal subunit, possibly for assembly of the head region. Essential for efficient processing of 16S rRNA. May be needed both before and after RbfA during the maturation of 16S rRNA. It has affinity for free ribosomal 30S subunits but not for 70S ribosomes. The polypeptide is Ribosome maturation factor RimM (Rickettsia felis (strain ATCC VR-1525 / URRWXCal2) (Rickettsia azadi)).